Consider the following 412-residue polypeptide: Clamp protein VP6 (412 aa).

It belongs to the reoviridae clamp protein family. Interacts with capsid proteins VP3, VP5 and VP7.

It localises to the virion. In terms of biological role, located at the interface of the incomplete T=13 outer capsid and the pseudo T=2 inner capsid, 120 VP6 subunits clamp and stabilizes the inner capsid shell. The polypeptide is Clamp protein VP6 (S8) (Aquareovirus C (isolate Golden shiner/USA/GSRV/1977) (AQRV-C)).